The primary structure comprises 321 residues: Lipoyl synthase (321 aa).

[4Fe-4S] cluster is bound by residues Cys-68, Cys-73, Cys-79, Cys-94, Cys-98, Cys-101, and Ser-308. Positions 80–297 (FNHGTATFMI…KALADELGFT (218 aa)) constitute a Radical SAM core domain.

It belongs to the radical SAM superfamily. Lipoyl synthase family. Requires [4Fe-4S] cluster as cofactor.

Its subcellular location is the cytoplasm. It catalyses the reaction [[Fe-S] cluster scaffold protein carrying a second [4Fe-4S](2+) cluster] + N(6)-octanoyl-L-lysyl-[protein] + 2 oxidized [2Fe-2S]-[ferredoxin] + 2 S-adenosyl-L-methionine + 4 H(+) = [[Fe-S] cluster scaffold protein] + N(6)-[(R)-dihydrolipoyl]-L-lysyl-[protein] + 4 Fe(3+) + 2 hydrogen sulfide + 2 5'-deoxyadenosine + 2 L-methionine + 2 reduced [2Fe-2S]-[ferredoxin]. It participates in protein modification; protein lipoylation via endogenous pathway; protein N(6)-(lipoyl)lysine from octanoyl-[acyl-carrier-protein]: step 2/2. Catalyzes the radical-mediated insertion of two sulfur atoms into the C-6 and C-8 positions of the octanoyl moiety bound to the lipoyl domains of lipoate-dependent enzymes, thereby converting the octanoylated domains into lipoylated derivatives. In Shewanella baltica (strain OS185), this protein is Lipoyl synthase.